Reading from the N-terminus, the 274-residue chain is uncharacterized protein (274 aa).

The N-terminal stretch at 1–30 (MTIDTPAREDQTLAATHRAMWALGDYALMA) is a signal peptide.

To M.tuberculosis Rv1403c.

This is an uncharacterized protein from Mycobacterium bovis (strain ATCC BAA-935 / AF2122/97).